Here is a 557-residue protein sequence, read N- to C-terminus: Protein Red (557 aa).

Positions 1–90 (MPERDSEPFS…YAKLRQQEIE (90 aa)) are disordered. Residues 16-25 (DGHDVDDPHS) show a composition bias toward basic and acidic residues. Residues 42 to 53 (TPRAAPTSAPPS) are compositionally biased toward low complexity. Residues K98 and K137 each carry the N6-acetyllysine modification. K151 participates in a covalent cross-link: Glycyl lysine isopeptide (Lys-Gly) (interchain with G-Cter in SUMO2). Residues 181–205 (KEKEEEELMEKPQKETKKDEDPENK) form a disordered region. S287 carries the post-translational modification Phosphoserine. Residues 294–303 (RNKKLKKKDK) show a composition bias toward basic residues. Positions 294–402 (RNKKLKKKDK…PMDVDKGPGS (109 aa)) are disordered. Over residues 304–313 (GKLEEKKPPE) the composition is skewed to basic and acidic residues. Residues K310 and K331 each participate in a glycyl lysine isopeptide (Lys-Gly) (interchain with G-Cter in SUMO2) cross-link. Residues 332 to 398 (TPRDKERERY…VDDEPMDVDK (67 aa)) are compositionally biased toward basic and acidic residues. 17 consecutive repeat copies span residues 342-343 (RE), 344-345 (RE), 346-347 (RD), 348-349 (RE), 350-351 (RD), 352-353 (RD), 354-355 (RE), 356-357 (RD), 358-359 (RE), 360-361 (RD), 362-363 (RE), 364-365 (RE), 366-367 (RE), 368-369 (RD), 370-371 (RE), 372-373 (RE), and 374-375 (RE). Residues 342–375 (RERERDRERDRDRERDRERDRERERERDRERERE) form a 17 X 2 AA tandem repeats of R-[ED] region. Residues K386, K388, K404, and K408 each participate in a glycyl lysine isopeptide (Lys-Gly) (interchain with G-Cter in SUMO2) cross-link. Phosphoserine is present on residues S417 and S460. Phosphothreonine is present on T485. Residues K496, K501, and K509 each participate in a glycyl lysine isopeptide (Lys-Gly) (interchain with G-Cter in SUMO2) cross-link. Position 536 is a phosphoserine (S536). Residues K541, K543, K544, and K553 each participate in a glycyl lysine isopeptide (Lys-Gly) (interchain with G-Cter in SUMO2) cross-link.

Belongs to the RED family. In terms of assembly, component of the spliceosome B complex. Interacts with SMU1. Interacts with MAD1L1. May interact with DHX15.

It localises to the nucleus. The protein localises to the nucleoplasm. It is found in the chromosome. The protein resides in the cytoplasm. Its subcellular location is the cytoskeleton. It localises to the spindle pole. Its function is as follows. Involved in pre-mRNA splicing as a component of the spliceosome. Auxiliary spliceosomal protein that regulates selection of alternative splice sites in a small set of target pre-mRNA species. Required for normal mitotic cell cycle progression. Recruits MAD1L1 and MAD2L1 to kinetochores, and is required to trigger the spindle assembly checkpoint. Required for normal accumulation of SMU1. The sequence is that of Protein Red (Ik) from Rattus norvegicus (Rat).